The chain runs to 405 residues: 2,3-diketo-5-methylthiopentyl-1-phosphate enolase (405 aa).

Lys91 serves as the catalytic Proton acceptor. Substrate is bound by residues Lys140, 166-169 (KDDE), His257, Gly329, and 351-352 (GG). Mg(2+) contacts are provided by Lys166, Asp168, and Glu169. Position 166 is an N6-carboxylysine (Lys166).

This sequence belongs to the RuBisCO large chain family. Type IV subfamily. As to quaternary structure, homodimer. It depends on Mg(2+) as a cofactor.

It carries out the reaction 5-methylsulfanyl-2,3-dioxopentyl phosphate = 2-hydroxy-5-methylsulfanyl-3-oxopent-1-enyl phosphate. Its pathway is amino-acid biosynthesis; L-methionine biosynthesis via salvage pathway; L-methionine from S-methyl-5-thio-alpha-D-ribose 1-phosphate: step 3/6. In terms of biological role, catalyzes the enolization of 2,3-diketo-5-methylthiopentyl-1-phosphate (DK-MTP-1-P) into 2-hydroxy-3-keto-5-methylthiopentenyl-1-phosphate (HK-MTPenyl-1-P). In Bacillus licheniformis (strain ATCC 14580 / DSM 13 / JCM 2505 / CCUG 7422 / NBRC 12200 / NCIMB 9375 / NCTC 10341 / NRRL NRS-1264 / Gibson 46), this protein is 2,3-diketo-5-methylthiopentyl-1-phosphate enolase.